Reading from the N-terminus, the 120-residue chain is Large ribosomal subunit protein uL18 (120 aa).

This sequence belongs to the universal ribosomal protein uL18 family. As to quaternary structure, part of the 50S ribosomal subunit; part of the 5S rRNA/L5/L18/L25 subcomplex. Contacts the 5S and 23S rRNAs.

Functionally, this is one of the proteins that bind and probably mediate the attachment of the 5S RNA into the large ribosomal subunit, where it forms part of the central protuberance. This is Large ribosomal subunit protein uL18 from Herminiimonas arsenicoxydans.